Reading from the N-terminus, the 353-residue chain is Photosystem II protein D1 (353 aa).

Residue T2 is modified to N-acetylthreonine. Position 2 is a phosphothreonine (T2). The next 3 membrane-spanning stretches (helical) occupy residues Y29–S46, H118–L133, and W142–A156. Position 118 (H118) interacts with chlorophyll a. Residue Y126 participates in pheophytin a binding. The [CaMn4O5] cluster site is built by D170 and E189. A helical membrane pass occupies residues F197–L218. H198 is a binding site for chlorophyll a. Residues H215 and S264–F265 each bind a quinone. A Fe cation-binding site is contributed by H215. Residue H272 coordinates Fe cation. Residues F274–L288 traverse the membrane as a helical segment. Positions 332, 333, 342, and 344 each coordinate [CaMn4O5] cluster. The propeptide occupies A345–G353.

This sequence belongs to the reaction center PufL/M/PsbA/D family. PSII is composed of 1 copy each of membrane proteins PsbA, PsbB, PsbC, PsbD, PsbE, PsbF, PsbH, PsbI, PsbJ, PsbK, PsbL, PsbM, PsbT, PsbX, PsbY, PsbZ, Psb30/Ycf12, at least 3 peripheral proteins of the oxygen-evolving complex and a large number of cofactors. It forms dimeric complexes. The cofactor is The D1/D2 heterodimer binds P680, chlorophylls that are the primary electron donor of PSII, and subsequent electron acceptors. It shares a non-heme iron and each subunit binds pheophytin, quinone, additional chlorophylls, carotenoids and lipids. D1 provides most of the ligands for the Mn4-Ca-O5 cluster of the oxygen-evolving complex (OEC). There is also a Cl(-1) ion associated with D1 and D2, which is required for oxygen evolution. The PSII complex binds additional chlorophylls, carotenoids and specific lipids.. Tyr-161 forms a radical intermediate that is referred to as redox-active TyrZ, YZ or Y-Z. In terms of processing, C-terminally processed by CTPA; processing is essential to allow assembly of the oxygen-evolving complex and thus photosynthetic growth.

It localises to the plastid. The protein resides in the chloroplast thylakoid membrane. The enzyme catalyses 2 a plastoquinone + 4 hnu + 2 H2O = 2 a plastoquinol + O2. Functionally, photosystem II (PSII) is a light-driven water:plastoquinone oxidoreductase that uses light energy to abstract electrons from H(2)O, generating O(2) and a proton gradient subsequently used for ATP formation. It consists of a core antenna complex that captures photons, and an electron transfer chain that converts photonic excitation into a charge separation. The D1/D2 (PsbA/PsbD) reaction center heterodimer binds P680, the primary electron donor of PSII as well as several subsequent electron acceptors. This Pinus koraiensis (Korean pine) protein is Photosystem II protein D1.